The following is a 559-amino-acid chain: Nicotinate phosphoribosyltransferase 1 (559 aa).

2 residues coordinate nicotinate: Tyr-33 and Thr-221. His-224 bears the Phosphohistidine mark. Arg-331 provides a ligand contact to nicotinate. Thr-393 lines the 5-phospho-alpha-D-ribose 1-diphosphate pocket.

It belongs to the NAPRTase family. It depends on Mg(2+) as a cofactor. Mn(2+) serves as cofactor. Transiently phosphorylated on a His residue during the reaction cycle. Phosphorylation strongly increases the affinity for substrates and increases the rate of nicotinate D-ribonucleotide production. Dephosphorylation regenerates the low-affinity form of the enzyme, leading to product release.

It carries out the reaction nicotinate + 5-phospho-alpha-D-ribose 1-diphosphate + ATP + H2O = nicotinate beta-D-ribonucleotide + ADP + phosphate + diphosphate. It participates in cofactor biosynthesis; NAD(+) biosynthesis; nicotinate D-ribonucleotide from nicotinate: step 1/1. Its function is as follows. Catalyzes the first step in the biosynthesis of NAD from nicotinic acid, the ATP-dependent synthesis of beta-nicotinate D-ribonucleotide from nicotinate and 5-phospho-D-ribose 1-phosphate. Helps prevent cellular oxidative stress via its role in NAD biosynthesis. This chain is Nicotinate phosphoribosyltransferase 1, found in Arabidopsis thaliana (Mouse-ear cress).